The sequence spans 671 residues: Autophagy-related protein 22-2 (671 aa).

Composition is skewed to polar residues over residues 1–10 and 19–34; these read MVPRNFSESQ and PSNS…SSSF. Residues 1-67 form a disordered region; sequence MVPRNFSESQ…RDVPAQYAGE (67 aa). N5 and N21 each carry an N-linked (GlcNAc...) asparagine glycan. The span at 39 to 60 shows a compositional bias: basic and acidic residues; that stretch reads ERSSSADHDSMGPDIGSAHRDV. The next 4 membrane-spanning stretches (helical) occupy residues 83–103, 155–175, 188–208, and 212–232; these read YGFA…PITL, SFAM…VVSI, LLLF…TVVP, and LLGA…FVLL. Residues 251-271 form a disordered region; it reads PDFSPEFRPSSVDESPPEHSL. Residues 324–344 traverse the membrane as a helical segment; sequence IGIGYSAGLFLQCVSIVIIWL. N346 is a glycosylation site (N-linked (GlcNAc...) asparagine). 7 helical membrane passes run 354–374, 422–442, 457–477, 491–511, 523–543, 560–582, and 591–611; these read LVLF…ALWL, FFLA…GTAV, GLIN…WAAI, ACIC…LPIV, WEMY…SSYC, YALY…GAIV, and AFWF…FVNV. A disordered region spans residues 634 to 671; sequence ESAGEGSRGSSIDHESGQNEGLIYPRVGENAGRGRNDI.

This sequence belongs to the ATG22 family.

Its subcellular location is the vacuole membrane. Its function is as follows. Vacuolar effluxer which mediate the efflux of amino acids resulting from autophagic degradation. The release of autophagic amino acids allows the maintenance of protein synthesis and viability during nitrogen starvation. The sequence is that of Autophagy-related protein 22-2 (atg22-2) from Sclerotinia sclerotiorum (strain ATCC 18683 / 1980 / Ss-1) (White mold).